The primary structure comprises 389 residues: Exodeoxyribonuclease 7 large subunit (389 aa).

Belongs to the XseA family. As to quaternary structure, heterooligomer composed of large and small subunits.

It is found in the cytoplasm. It catalyses the reaction Exonucleolytic cleavage in either 5'- to 3'- or 3'- to 5'-direction to yield nucleoside 5'-phosphates.. Bidirectionally degrades single-stranded DNA into large acid-insoluble oligonucleotides, which are then degraded further into small acid-soluble oligonucleotides. This Pseudothermotoga lettingae (strain ATCC BAA-301 / DSM 14385 / NBRC 107922 / TMO) (Thermotoga lettingae) protein is Exodeoxyribonuclease 7 large subunit.